The sequence spans 218 residues: Insulin-induced gene 2 protein (218 aa).

Residues 1–21 (MGETDNAPRGPPSFLPHKMNL) are Cytoplasmic-facing. Residues 22 to 44 (LLRGLLLFLIGVFLALVLNLLQV) form a helical membrane-spanning segment. Residues 45–63 (QRNVTLFPPDVLSSLFSSA) lie on the Lumenal side of the membrane. Residues 64 to 81 (WWVPLCCGTAAAAIGLLY) traverse the membrane as a helical segment. Residues 82–96 (PCIDRHLGEPHKFKR) are Cytoplasmic-facing. A helical membrane pass occupies residues 97 to 119 (EWSSVMRCVAVFVGINHASAKVD). Residues 120 to 122 (FAN) are Lumenal-facing. The helical transmembrane segment at 123 to 141 (NTQLSLTLAALSIGLWWTF) threads the bilayer. Topologically, residues 142–146 (DRSRS) are cytoplasmic. The chain crosses the membrane as a helical span at residues 147-168 (GLGLGIGISFFATVVSQLLVYN). Residues 169–182 (GVYEYTAPDFLYVR) are Lumenal-facing. Residues 183-200 (SWLPCIFFAGGITMGNIG) form a helical membrane-spanning segment. Topologically, residues 201–218 (RQLEMYERLALVEKSHRD) are cytoplasmic. The KxHxx signature appears at 212-218 (VEKSHRD).

This sequence belongs to the INSIG family. As to quaternary structure, interacts with scap; interaction is direct and only takes place in the presence of sterols; it prevents interaction between scap and the coat protein complex II (COPII). Associates with the SCAP-SREBP complex; association is mediated via its interaction with scap and only takes place in the presence of sterols.

The protein localises to the endoplasmic reticulum membrane. Its function is as follows. Oxysterol-binding protein that mediates feedback control of cholesterol synthesis by controlling both endoplasmic reticulum to Golgi transport of scap and degradation of hmgcr. Acts as a negative regulator of cholesterol biosynthesis by mediating the retention of the SCAP-SREBP complex in the endoplasmic reticulum, thereby blocking the processing of sterol regulatory element-binding proteins (SREBPs). Binds oxysterol, including 22-hydroxycholesterol, 24-hydroxycholesterol, 25-hydroxycholesterol and 27-hydroxycholesterol, regulating interaction with scap and retention of the SCAP-SREBP complex in the endoplasmic reticulum. In presence of oxysterol, interacts with scap, retaining the SCAP-SREBP complex in the endoplasmic reticulum, thereby preventing scap from escorting SREBPs to the Golgi. Sterol deprivation reduce oxysterol-binding, disrupting the interaction between insig2 and scap, thereby promoting Golgi transport of the SCAP-SREBP complex, followed by processing and nuclear translocation of SREBPs. Also regulates cholesterol synthesis by regulating degradation of hmgcr. This Xenopus tropicalis (Western clawed frog) protein is Insulin-induced gene 2 protein.